The following is a 233-amino-acid chain: LexA repressor (233 aa).

Positions 26–46 form a DNA-binding region, H-T-H motif; the sequence is FDEMKDALDLRSKSGIHRLIT. Catalysis depends on for autocatalytic cleavage activity residues S154 and K192.

It belongs to the peptidase S24 family. Homodimer.

The enzyme catalyses Hydrolysis of Ala-|-Gly bond in repressor LexA.. Represses a number of genes involved in the response to DNA damage (SOS response), including recA and lexA. In the presence of single-stranded DNA, RecA interacts with LexA causing an autocatalytic cleavage which disrupts the DNA-binding part of LexA, leading to derepression of the SOS regulon and eventually DNA repair. This chain is LexA repressor, found in Nitrobacter winogradskyi (strain ATCC 25391 / DSM 10237 / CIP 104748 / NCIMB 11846 / Nb-255).